A 784-amino-acid polypeptide reads, in one-letter code: MRRSLAPSQRGPLRPESRHSFTPPLLKKNKRSCQQELEREQELDRKRQSALRDASNTLELPLPIRFTANSEYERAIAKVLARKFKVPMDNYVPDYGGKRVLGVRRCISRRPLHDPVACNALVLFHPPAYTEHERMGMDPSKVLVHVVVDPLLSNILRPHQREGVRFMYECVEGKRGNFNGCIMADEMGLGKTLQCVTLVWTLLRQGPECKPTINKAIVVSPSSLVKNWEKEFTKWLQGRLLCLPMEGGTKENTIRALEQFSMTSSRLGTPVLLISYETFRIYAEILCKYEVGMVICDEGHRLKNSDNLTYQALMGLKTKRRVLLSGTPIQNDLTEYYSLVNFVNPEMLGTAAVFKRNFESAILRGQNTDSTDAERQRAIAKTQELIGLVDQCIIRRTNQILTKYLPVKFEMVICAKLTSIQLELYTNFLKSDQVRRSLADCKEKASLTALADITTLKKICSHPNLIYEKITARDKGFENSQNVLPSNYNAKDLNPELSGKFMLLDFMLAAIRADGNDKVVLISNYTQTLDLFEQLARKRKYGFVRLDGTMSIKKRSKVVDRFNDPESDSFLFMLSSKAGGCGLNLIGANRLFMFDPDWNPANDEQAMARVWRDGQKKPCYIYRLVASGSIEEKILQRQTHKKSLSSTIIDNNESAEKHFTRDDLKDLFTFDADILSDTHDKLKCKRCVQNIQMKPPPEDTDCTSHLSQWYHCSNNRGLPDNILAQAWMDCKCVSFVFHHRSQAQEIVASAEEAASEQPEEKPDRRKRPSTPLSDDSADEDFLGF.

The tract at residues 1 to 50 (MRRSLAPSQRGPLRPESRHSFTPPLLKKNKRSCQQELEREQELDRKRQSA) is disordered. Residues 2-9 (RRSLAPSQ) form a required for chromatin remodeling, strand pairing activities and coupling of ATPase activity region. The residue at position 20 (Ser-20) is a Phosphoserine. The residue at position 22 (Thr-22) is a Phosphothreonine. Over residues 36–47 (ELEREQELDRKR) the composition is skewed to basic and acidic residues. The 175-residue stretch at 172-346 (EGKRGNFNGC…YSLVNFVNPE (175 aa)) folds into the Helicase ATP-binding domain. An ATP-binding site is contributed by 185–192 (DEMGLGKT). Residues 297–300 (DEGH) carry the DEGH box motif. Positions 503 to 660 (LLDFMLAAIR…NNESAEKHFT (158 aa)) constitute a Helicase C-terminal domain. Over residues 747-756 (VASAEEAASE) the composition is skewed to low complexity. The disordered stretch occupies residues 747-784 (VASAEEAASEQPEEKPDRRKRPSTPLSDDSADEDFLGF). The span at 775 to 784 (DSADEDFLGF) shows a compositional bias: acidic residues.

It belongs to the SNF2/RAD54 helicase family. In terms of assembly, interacts (via N-terminus) with spn-A/Rad51.

The protein resides in the nucleus. Its function is as follows. Involved in mitotic DNA repair and meiotic recombination. Functions in the recombinational DNA repair pathway. Essential for interhomolog gene conversion (GC), but may have a less important role in intersister GC than spn-A/Rad51. In the presence of DNA, spn-A/Rad51 enhances the ATPase activity of okr/Rad54. This Drosophila erecta (Fruit fly) protein is DNA repair and recombination protein RAD54-like.